A 286-amino-acid polypeptide reads, in one-letter code: uncharacterized protein (286 aa).

7 helical membrane-spanning segments follow: residues 30–50 (LTFM…LTVQ), 68–88 (LSTI…VTAF), 99–119 (WFWA…GILL), 136–156 (IVYA…LSAL), 169–189 (LFHI…LSFI), 205–225 (IIPG…VYFV), and 254–274 (SALF…YFIL).

The protein localises to the cell membrane. This is an uncharacterized protein from Mycoplasma genitalium (strain ATCC 33530 / DSM 19775 / NCTC 10195 / G37) (Mycoplasmoides genitalium).